We begin with the raw amino-acid sequence, 2157 residues long: Genome polyprotein (2157 aa).

Gly2 carries N-myristoyl glycine; by host lipidation. Topologically, residues 2–1470 (GAQVSRQNVG…DLSIANSIIT (1469 aa)) are cytoplasmic. An amphipathic alpha-helix region spans residues 567–584 (PIEQNPVENYIDEVLNEV). Active-site for protease 2A activity residues include His875 and Asp892. Zn(2+) is bound by residues Cys909 and Cys911. The For protease 2A activity role is filled by Cys963. Cys969 and His971 together coordinate Zn(2+). Residues 1095-1164 (SDSWLKKFTE…NLRAADNATQ (70 aa)) form a membrane-binding region. The tract at residues 1095–1228 (SDSWLKKFTE…PPGTGKSITT (134 aa)) is oligomerization. An RNA-binding region spans residues 1116-1120 (GNKIS). Positions 1188–1350 (EAKRIKVLYN…YKDAQGKLNV (163 aa)) constitute an SF3 helicase domain. Zn(2+)-binding residues include Cys1357, Cys1368, and Cys1373. The C4-type; degenerate zinc finger occupies 1357–1373 (CNVNTKIGNAKCCPFVC). Residues 1400 to 1407 (EDKRRRQV) are RNA-binding. The tract at residues 1411-1416 (MSAIFQ) is oligomerization. The stretch at 1471-1486 (IIANIISIAGIIFVIY) is an intramembrane region. Residues 1487-2157 (KLFCTLQGPY…LLKHEWYEKF (671 aa)) lie on the Cytoplasmic side of the membrane. Tyr1496 carries the O-(5'-phospho-RNA)-tyrosine modification. The Peptidase C3 domain occupies 1515 to 1693 (GPEEEFGRSI…FSAMLLRSYF (179 aa)). Catalysis depends on for protease 3C activity residues His1554, Glu1585, and Cys1661. One can recognise a RdRp catalytic domain in the interval 1925-2038 (DCIMAFDYTN…SYKYTLDMEA (114 aa)). Mg(2+) is bound by residues Asp1931 and Asp2024.

The protein belongs to the picornaviruses polyprotein family. As to quaternary structure, interacts with capsid protein VP1 and capsid protein VP3 to form heterotrimeric protomers. In terms of assembly, interacts with capsid protein VP0, and capsid protein VP3 to form heterotrimeric protomers. Five protomers subsequently associate to form pentamers which serve as building blocks for the capsid. Interacts with capsid protein VP2, capsid protein VP3 and capsid protein VP4 following cleavage of capsid protein VP0. Interacts with capsid protein VP1 and capsid protein VP3 in the mature capsid. As to quaternary structure, interacts with capsid protein VP0 and capsid protein VP1 to form heterotrimeric protomers. Five protomers subsequently associate to form pentamers which serve as building blocks for the capsid. Interacts with capsid protein VP4 in the mature capsid. Interacts with protein 2C; this interaction may be important for virion morphogenesis. In terms of assembly, interacts with capsid protein VP1 and capsid protein VP3. Homodimer. As to quaternary structure, homohexamer; forms a hexameric ring structure with 6-fold symmetry characteristic of AAA+ ATPases. Interacts (via N-terminus) with host RTN3 (via reticulon domain); this interaction is important for viral replication. Interacts with capsid protein VP3; this interaction may be important for virion morphogenesis. In terms of assembly, interacts with protein 3CD. Homodimer. Interacts with host GBF1. Interacts (via GOLD domain) with host ACBD3 (via GOLD domain); this interaction allows the formation of a viral protein 3A/ACBD3 heterotetramer with a 2:2 stoichiometry, which will stimulate the recruitment of host PI4KB in order to synthesize PI4P at the viral RNA replication sites. As to quaternary structure, interacts with RNA-directed RNA polymerase. In terms of assembly, interacts with protein 3AB and with RNA-directed RNA polymerase. Interacts with Viral protein genome-linked and with protein 3CD. Mg(2+) serves as cofactor. In terms of processing, specific enzymatic cleavages in vivo by the viral proteases yield processing intermediates and the mature proteins. Post-translationally, myristoylation is required for the formation of pentamers during virus assembly. Further assembly of 12 pentamers and a molecule of genomic RNA generates the provirion. During virion maturation, immature virions are rendered infectious following cleavage of VP0 into VP4 and VP2. This maturation seems to be an autocatalytic event triggered by the presence of RNA in the capsid and it is followed by a conformational change infectious virion. In terms of processing, myristoylation is required during RNA encapsidation and formation of the mature virus particle. Post-translationally, VPg is uridylylated by the polymerase into VPg-pUpU. This acts as a nucleotide-peptide primer for the genomic RNA replication.

It localises to the virion. It is found in the host cytoplasm. The protein resides in the host cytoplasmic vesicle membrane. Its subcellular location is the host nucleus. The catalysed reaction is a ribonucleoside 5'-triphosphate + H2O = a ribonucleoside 5'-diphosphate + phosphate + H(+). It catalyses the reaction Selective cleavage of Tyr-|-Gly bond in the picornavirus polyprotein.. The enzyme catalyses RNA(n) + a ribonucleoside 5'-triphosphate = RNA(n+1) + diphosphate. It carries out the reaction Selective cleavage of Gln-|-Gly bond in the poliovirus polyprotein. In other picornavirus reactions Glu may be substituted for Gln, and Ser or Thr for Gly.. With respect to regulation, replication or transcription is subject to high level of random mutations by the nucleotide analog ribavirin. Forms an icosahedral capsid of pseudo T=3 symmetry with capsid proteins VP2 and VP3. The capsid is 300 Angstroms in diameter, composed of 60 copies of each capsid protein and enclosing the viral positive strand RNA genome. Capsid protein VP1 mainly forms the vertices of the capsid. Capsid protein VP1 interacts with host cell receptor to provide virion attachment to target host cells. This attachment induces virion internalization. Tyrosine kinases are probably involved in the entry process. After binding to its receptor, the capsid undergoes conformational changes. Capsid protein VP1 N-terminus (that contains an amphipathic alpha-helix) and capsid protein VP4 are externalized. Together, they shape a pore in the host membrane through which viral genome is translocated to host cell cytoplasm. In terms of biological role, forms an icosahedral capsid of pseudo T=3 symmetry with capsid proteins VP2 and VP3. The capsid is 300 Angstroms in diameter, composed of 60 copies of each capsid protein and enclosing the viral positive strand RNA genome. Its function is as follows. Lies on the inner surface of the capsid shell. After binding to the host receptor, the capsid undergoes conformational changes. Capsid protein VP4 is released, Capsid protein VP1 N-terminus is externalized, and together, they shape a pore in the host membrane through which the viral genome is translocated into the host cell cytoplasm. Functionally, component of immature procapsids, which is cleaved into capsid proteins VP4 and VP2 after maturation. Allows the capsid to remain inactive before the maturation step. Cysteine protease that cleaves viral polyprotein and specific host proteins. It is responsible for the autocatalytic cleavage between the P1 and P2 regions, which is the first cleavage occurring in the polyprotein. Also cleaves the host translation initiation factor EIF4G1, in order to shut down the capped cellular mRNA translation. Inhibits the host nucleus-cytoplasm protein and RNA trafficking by cleaving host members of the nuclear pores. Counteracts stress granule formation probably by antagonizing its assembly or promoting its dissassembly. In terms of biological role, plays an essential role in the virus replication cycle by acting as a viroporin. Creates a pore in the host endoplasmic reticulum and as a consequence releases Ca2+ in the cytoplasm of infected cell. In turn, high levels of cytoplasmic calcium may trigger membrane trafficking and transport of viral ER-associated proteins to viroplasms, sites of viral genome replication. Its function is as follows. Induces and associates with structural rearrangements of intracellular membranes. Displays RNA-binding, nucleotide binding and NTPase activities. May play a role in virion morphogenesis and viral RNA encapsidation by interacting with the capsid protein VP3. Functionally, localizes the viral replication complex to the surface of membranous vesicles. Together with protein 3CD binds the Cis-Active RNA Element (CRE) which is involved in RNA synthesis initiation. Acts as a cofactor to stimulate the activity of 3D polymerase, maybe through a nucleid acid chaperone activity. Localizes the viral replication complex to the surface of membranous vesicles. It inhibits host cell endoplasmic reticulum-to-Golgi apparatus transport and causes the disassembly of the Golgi complex, possibly through GBF1 interaction. This would result in depletion of MHC, trail receptors and IFN receptors at the host cell surface. Plays an essential role in viral RNA replication by recruiting ACBD3 and PI4KB at the viral replication sites, thereby allowing the formation of the rearranged membranous structures where viral replication takes place. In terms of biological role, acts as a primer for viral RNA replication and remains covalently bound to viral genomic RNA. VPg is uridylylated prior to priming replication into VPg-pUpU. The oriI viral genomic sequence may act as a template for this. The VPg-pUpU is then used as primer on the genomic RNA poly(A) by the RNA-dependent RNA polymerase to replicate the viral genome. During genome replication, the VPg-RNA linkage is removed by the host TDP2, thereby accelerating replication. During the late stage of the replication cycle, host TDP2 is excluded from sites of viral RNA synthesis and encapsidation, allowing for the generation of progeny virions. Its function is as follows. Involved in the viral replication complex and viral polypeptide maturation. It exhibits protease activity with a specificity and catalytic efficiency that is different from protease 3C. Protein 3CD lacks polymerase activity. Protein 3CD binds to the 5'UTR of the viral genome. Functionally, replicates the viral genomic RNA on the surface of intracellular membranes. May form linear arrays of subunits that propagate along a strong head-to-tail interaction called interface-I. Covalently attaches UMP to a tyrosine of VPg, which is used to prime RNA synthesis. The positive stranded RNA genome is first replicated at virus induced membranous vesicles, creating a dsRNA genomic replication form. This dsRNA is then used as template to synthesize positive stranded RNA genomes. ss(+)RNA genomes are either translated, replicated or encapsidated. Major viral protease that mediates proteolytic processing of the polyprotein. Cleaves host EIF5B, contributing to host translation shutoff. Also cleaves host PABPC1, contributing to host translation shutoff. Cleaves host NLRP1, triggers host N-glycine-mediated degradation of the autoinhibitory NLRP1 N-terminal fragment. The chain is Genome polyprotein from Homo sapiens (Human).